Reading from the N-terminus, the 486-residue chain is Malonate-semialdehyde dehydrogenase (486 aa).

Residues Phe-154, Lys-178, Glu-181, Arg-182, and Ser-231 each contribute to the NAD(+) site. Cys-286 serves as the catalytic Nucleophile. Glu-386 is an NAD(+) binding site.

Belongs to the aldehyde dehydrogenase family. IolA subfamily. As to quaternary structure, homotetramer.

The enzyme catalyses 3-oxopropanoate + NAD(+) + CoA + H2O = hydrogencarbonate + acetyl-CoA + NADH + H(+). It carries out the reaction 2-methyl-3-oxopropanoate + NAD(+) + CoA + H2O = propanoyl-CoA + hydrogencarbonate + NADH + H(+). It functions in the pathway polyol metabolism; myo-inositol degradation into acetyl-CoA; acetyl-CoA from myo-inositol: step 7/7. Catalyzes the oxidation of malonate semialdehyde (MSA) and methylmalonate semialdehyde (MMSA) into acetyl-CoA and propanoyl-CoA, respectively. Is involved in a myo-inositol catabolic pathway. Bicarbonate, and not CO2, is the end-product of the enzymatic reaction. This chain is Malonate-semialdehyde dehydrogenase, found in Bacillus cereus (strain G9842).